The primary structure comprises 443 residues: COP9 signalosome complex subunit 2 (443 aa).

A PCI domain is found at 254–416 (AHTDFFEAFK…QLLELDHQKR (163 aa)).

Belongs to the CSN2 family. As to quaternary structure, component of the CSN complex, probably composed of cops1, cops2, cops3, cops4, cops5, cops6, cops7, cops8 and cops9.

The protein resides in the cytoplasm. Its subcellular location is the nucleus. In terms of biological role, essential component of the COP9 signalosome complex (CSN), a complex involved in various cellular and developmental processes. The CSN complex is an essential regulator of the ubiquitin (Ubl) conjugation pathway by mediating the deneddylation of the cullin subunits of E3 ligase complexes, leading to modify the Ubl ligase activity. The chain is COP9 signalosome complex subunit 2 (cops2) from Danio rerio (Zebrafish).